The sequence spans 280 residues: MGQKINPHGFRLGITTDWKSRWYADKQYADYVKEDVAIRRLLSTGLERAGIADVEIERTRDRVRVDIHTARPGIVIGRRGTEADRIRADLEKLTGKQVQLNILEVRNPESQAQLVAQGVAEQLSNRVAFRRAMRKAIQSAMRQPNVKGIRVQCSGRLGGAEMSRSEFYREGRVPLHTLRADIDYGLYEAKTTFGRIGVKVWIYKGDVVGGKRELAAAAPAGAERPRRERPSGTRPRRSGASGTTATGTEAGRAAASADESTAAGQPAEAAPAAEPQSTES.

In terms of domain architecture, KH type-2 spans 38-106; it reads IRRLLSTGLE…QVQLNILEVR (69 aa). Residues 215–280 are disordered; it reads AAAAPAGAER…PAAEPQSTES (66 aa). Residues 238-280 show a composition bias toward low complexity; sequence SGASGTTATGTEAGRAAASADESTAAGQPAEAAPAAEPQSTES.

Belongs to the universal ribosomal protein uS3 family. As to quaternary structure, part of the 30S ribosomal subunit. Forms a tight complex with proteins S10 and S14.

Its function is as follows. Binds the lower part of the 30S subunit head. Binds mRNA in the 70S ribosome, positioning it for translation. This is Small ribosomal subunit protein uS3 from Mycobacterium avium (strain 104).